A 342-amino-acid polypeptide reads, in one-letter code: Ribosomal RNA small subunit methyltransferase C (342 aa).

This sequence belongs to the methyltransferase superfamily. RsmC family. Monomer.

Its subcellular location is the cytoplasm. The catalysed reaction is guanosine(1207) in 16S rRNA + S-adenosyl-L-methionine = N(2)-methylguanosine(1207) in 16S rRNA + S-adenosyl-L-homocysteine + H(+). In terms of biological role, specifically methylates the guanine in position 1207 of 16S rRNA in the 30S particle. The polypeptide is Ribosomal RNA small subunit methyltransferase C (Salmonella arizonae (strain ATCC BAA-731 / CDC346-86 / RSK2980)).